We begin with the raw amino-acid sequence, 518 residues long: Cytochrome P450 monooxygenase ARMGADRAFT_1018417 (518 aa).

A helical transmembrane segment spans residues 3 to 23 (LFSAYALAFSLLMIPLILYIL). Cys-433 contributes to the heme binding site. Asn-455 is a glycosylation site (N-linked (GlcNAc...) asparagine).

This sequence belongs to the cytochrome P450 family. It depends on heme as a cofactor.

The protein resides in the membrane. It functions in the pathway secondary metabolite biosynthesis. Cytochrome P450 monooxygenase, part of the gene cluster that mediates the biosynthesis of melleolides, a range of antifungal and phytotoxic polyketide derivatives composed of an orsellinic acid (OA) moiety esterified to various sesquiterpene alcohols. The first step in melleolides biosynthesis is performed by the delta(6)-protoilludene synthase PRO1 which catalyzes the cyclization of farnesyl diphosphate to protoilludene. The orsellinic acid synthase armB produces OA by condensing acetyl-CoA with 3 malonyl-CoA units in a three-round chain elongation reaction folowed by a C2-C7 ring closure. ArmB further catalyzes the trans-esterification of OA to the various sesquiterpene alcohols resulting from the hydroxylation of protoilludene. The melleolides cluster also includes 5 cytochrome P450 monooxygenases, 4 NAD(+)-dependent oxidoreductases, one flavin-dependent oxidoreductase, and one O-methyltransferase. The cytochrome P450 monooxygenases may be involved in protoilludene hydroxylation to elaborate melleolides with multiple alcohol groups, such as melleolide D, which carries alcohol functionalities at C-4, C-5, C-10, and C-13. The role of the NAD(+)-dependent enzymes remains unknown. Numerous melleolides, including arnamial, show 5'-O-methylation of the aromatic moiety which may be catalyzed by the methyltransferase encoded in the cluster. The flavin-dependent oxidoreductase might represent the dehydrogenase yielding the aldehyde in position 1 of arnamial and other melleolides. Finally, several halogenase localized outside of the cluster, are able to catalyze the transfer of a single chlorine atom to the melleolide backbone, resulting in a 6'-chloromelleolide product. This is Cytochrome P450 monooxygenase ARMGADRAFT_1018417 from Armillaria gallica (Bulbous honey fungus).